The primary structure comprises 430 residues: Peptidoglycan DD-endopeptidase ShyA (430 aa).

Residues 1-35 (MISKSIILRFSELSMRKKATLVGLPLLAVAAISSS) form the signal peptide. Positions 297, 301, and 378 each coordinate Zn(2+).

Belongs to the peptidase M23B family. Zn(2+) serves as cofactor.

The protein resides in the periplasm. The protein operates within cell wall degradation; peptidoglycan degradation. Its activity is regulated as follows. Reduced activity in 0.5 mM EDTA and a complete loss of activity at higher EDTA concentrations. The effect of EDTA can be reversed by addition of 1 mM ZnCl(2). Conformational switching between open (catalytically active) and closed (catalytically inactive) conformation of this protein is suggested mechanism of its regulation. The signal or inducer of the conformational shift to the open form unmasking the active site is currently not understood. In terms of biological role, cell wall peptidoglycan (PG) DD-endopeptidase essential for cell growth and elongation. Hydrolyzes peptide cross-links which covalently connect adjacent PG strands probably to allow insertion of new glycans and thus cell wall expansion. Degrades purified whole PG sacculi in vitro. Releases predominantly short glycan chains from the PG. Cleaves D,D cross-linked muropeptides specifically preferring dimeric tetrapeptide-tetrapeptide (D44) substrates and has only little activity on dimeric tetrapeptide-pentapeptide (D45) substrates. Also converts more than 50% of tetrapeptide-tripeptide (D43) to product as well as more than 50% of D43M, which contains D-Met instead of D-Ala in the fourth position of the acceptor moiety. Cleaves the D,D bond between diaminopimelic acid (DAP) and D-Ala of the PG substrate in vitro. No cleavage of L,D bond connecting two DAP moieties. The chain is Peptidoglycan DD-endopeptidase ShyA from Vibrio cholerae serotype O1 (strain ATCC 39315 / El Tor Inaba N16961).